The sequence spans 352 residues: Phosphoribosylformylglycinamidine cyclo-ligase (352 aa).

This sequence belongs to the AIR synthase family.

Its subcellular location is the cytoplasm. The catalysed reaction is 2-formamido-N(1)-(5-O-phospho-beta-D-ribosyl)acetamidine + ATP = 5-amino-1-(5-phospho-beta-D-ribosyl)imidazole + ADP + phosphate + H(+). Its pathway is purine metabolism; IMP biosynthesis via de novo pathway; 5-amino-1-(5-phospho-D-ribosyl)imidazole from N(2)-formyl-N(1)-(5-phospho-D-ribosyl)glycinamide: step 2/2. This chain is Phosphoribosylformylglycinamidine cyclo-ligase, found in Hahella chejuensis (strain KCTC 2396).